The sequence spans 516 residues: Protein indeterminate-domain 4, chloroplastic (516 aa).

The span at 1-26 (MSSSSYNTSVIPSSSSSAQPFFITSS) shows a compositional bias: low complexity. A disordered region spans residues 1–68 (MSSSSYNTSV…QPGNPNPDAE (68 aa)). The transit peptide at 1–70 (MSSSSYNTSV…GNPNPDAEVV (70 aa)) directs the protein to the chloroplast. At serine 73 the chain carries Phosphoserine. 2 consecutive C2H2-type zinc fingers follow at residues 83–105 (FICD…RRGH) and 124–154 (YLCP…YRKH). The Nuclear localization signal motif lies at 146-153 (IKKHYYRK). The segment at 159–182 (WKCEKCSKRYAVQSDWKAHSKTCG) adopts a C2H2-type 2; degenerate zinc-finger fold. Zn(2+) contacts are provided by cysteine 161, cysteine 164, histidine 177, cysteine 181, cysteine 188, cysteine 190, histidine 203, and cysteine 207. The CCHC-type 2; atypical zinc finger occupies 186–209 (YRCDCGTIFSRRDSYITHRAFCDA). Residues 196–208 (RRDSYITHRAFCD) are SHR-binding. Positions 483–516 (NRGGGGGGRGSARGGVSLDGEAKFPEQNYPFGRG) are disordered. Gly residues predominate over residues 484–495 (RGGGGGGRGSAR).

In terms of assembly, binds to RGA and SCL3 competitively in the nucleus.

The protein resides in the plastid. It is found in the chloroplast. The protein localises to the nucleus. Transcription factor that may act a transcriptional activator of nuclear-encoded photosynthetic gene expression. Binds DNA via its zinc fingers. Recognizes and binds to SCL3 promoter sequence 5'-AGACAA-3' to promote its expression when in complex with RGA. This chain is Protein indeterminate-domain 4, chloroplastic, found in Arabidopsis thaliana (Mouse-ear cress).